Consider the following 78-residue polypeptide: Translation initiation factor IF-1, chloroplastic (78 aa).

One can recognise an S1-like domain in the interval 1–72 (MKKQKLIDME…TKGRITYRFH (72 aa)).

Belongs to the IF-1 family. In terms of assembly, component of the 30S ribosomal translation pre-initiation complex which assembles on the 30S ribosome in the order IF-2 and IF-3, IF-1 and N-formylmethionyl-tRNA(fMet); mRNA recruitment can occur at any time during PIC assembly.

The protein resides in the plastid. Its subcellular location is the chloroplast. In terms of biological role, one of the essential components for the initiation of protein synthesis. Stabilizes the binding of IF-2 and IF-3 on the 30S subunit to which N-formylmethionyl-tRNA(fMet) subsequently binds. Helps modulate mRNA selection, yielding the 30S pre-initiation complex (PIC). Upon addition of the 50S ribosomal subunit IF-1, IF-2 and IF-3 are released leaving the mature 70S translation initiation complex. The polypeptide is Translation initiation factor IF-1, chloroplastic (Huperzia lucidula (Shining clubmoss)).